The following is a 114-amino-acid chain: Large ribosomal subunit protein uL22 (114 aa).

This sequence belongs to the universal ribosomal protein uL22 family. As to quaternary structure, part of the 50S ribosomal subunit.

In terms of biological role, this protein binds specifically to 23S rRNA; its binding is stimulated by other ribosomal proteins, e.g. L4, L17, and L20. It is important during the early stages of 50S assembly. It makes multiple contacts with different domains of the 23S rRNA in the assembled 50S subunit and ribosome. The globular domain of the protein is located near the polypeptide exit tunnel on the outside of the subunit, while an extended beta-hairpin is found that lines the wall of the exit tunnel in the center of the 70S ribosome. This chain is Large ribosomal subunit protein uL22, found in Myxococcus xanthus (strain DK1622).